We begin with the raw amino-acid sequence, 91 residues long: uncharacterized protein (91 aa).

This is an uncharacterized protein from Saccharolobus islandicus (Sulfolobus islandicus).